The chain runs to 284 residues: Probable endonuclease 4 (284 aa).

9 residues coordinate Zn(2+): H69, H109, E145, D179, H182, H216, D229, H231, and E261.

Belongs to the AP endonuclease 2 family. Zn(2+) is required as a cofactor.

It carries out the reaction Endonucleolytic cleavage to 5'-phosphooligonucleotide end-products.. Functionally, endonuclease IV plays a role in DNA repair. It cleaves phosphodiester bonds at apurinic or apyrimidinic (AP) sites, generating a 3'-hydroxyl group and a 5'-terminal sugar phosphate. The chain is Probable endonuclease 4 from Klebsiella pneumoniae subsp. pneumoniae (strain ATCC 700721 / MGH 78578).